Consider the following 807-residue polypeptide: DNA gyrase subunit B (807 aa).

The region spanning 429 to 543 (SELFIVEGDS…KGYLYIAQPP (115 aa)) is the Toprim domain. Mg(2+) is bound by residues E435, D508, and D510.

This sequence belongs to the type II topoisomerase GyrB family. Heterotetramer, composed of two GyrA and two GyrB chains. In the heterotetramer, GyrA contains the active site tyrosine that forms a transient covalent intermediate with DNA, while GyrB binds cofactors and catalyzes ATP hydrolysis. Mg(2+) is required as a cofactor. Requires Mn(2+) as cofactor. It depends on Ca(2+) as a cofactor.

It is found in the cytoplasm. The catalysed reaction is ATP-dependent breakage, passage and rejoining of double-stranded DNA.. In terms of biological role, a type II topoisomerase that negatively supercoils closed circular double-stranded (ds) DNA in an ATP-dependent manner to modulate DNA topology and maintain chromosomes in an underwound state. Negative supercoiling favors strand separation, and DNA replication, transcription, recombination and repair, all of which involve strand separation. Also able to catalyze the interconversion of other topological isomers of dsDNA rings, including catenanes and knotted rings. Type II topoisomerases break and join 2 DNA strands simultaneously in an ATP-dependent manner. The polypeptide is DNA gyrase subunit B (Rickettsia typhi (strain ATCC VR-144 / Wilmington)).